The primary structure comprises 110 residues: Large ribosomal subunit protein uL22 (110 aa).

The protein belongs to the universal ribosomal protein uL22 family. In terms of assembly, part of the 50S ribosomal subunit.

Its function is as follows. This protein binds specifically to 23S rRNA; its binding is stimulated by other ribosomal proteins, e.g. L4, L17, and L20. It is important during the early stages of 50S assembly. It makes multiple contacts with different domains of the 23S rRNA in the assembled 50S subunit and ribosome. Functionally, the globular domain of the protein is located near the polypeptide exit tunnel on the outside of the subunit, while an extended beta-hairpin is found that lines the wall of the exit tunnel in the center of the 70S ribosome. This chain is Large ribosomal subunit protein uL22, found in Aggregatibacter actinomycetemcomitans (Actinobacillus actinomycetemcomitans).